A 955-amino-acid polypeptide reads, in one-letter code: Kinesin-like protein K39 (955 aa).

One can recognise a Kinesin motor domain in the interval 12-392; it reads RVKVSVRVRP…LRYASRARDI (381 aa). ATP is bound at residue 122–129; it reads GQTGSGKT. Residues 426–955 are a coiled coil; it reads PAYVSELKKK…EERAAELASQ (530 aa). Disordered stretches follow at residues 682–712 and 725–955; these read ELDA…RESE and TAAA…LASQ. 7 repeat units span residues 704–742, 743–781, 782–820, 821–859, 860–898, 899–937, and 938–955. A 7 X 39 AA approximate tandem repeats region spans residues 704 to 955; sequence LEQQLRESEE…EERAAELASQ (252 aa). 5 stretches are compositionally biased toward basic and acidic residues: residues 785–794, 824–833, 863–872, 902–911, and 941–955; these read QLRDSEERAA, QLRESEERAA, and QLRD…LASQ.

This sequence belongs to the TRAFAC class myosin-kinesin ATPase superfamily. Kinesin family.

The protein localises to the cytoplasm. It localises to the cytoskeleton. The sequence is that of Kinesin-like protein K39 (KIN) from Leishmania chagasi.